Reading from the N-terminus, the 1093-residue chain is Probable phosphorylase b kinase regulatory subunit beta (1093 aa).

Residues 1-27 (MRDVPKSLGLSVTTPGGSSGAPDSGRH) are disordered. 3 calmodulin-binding regions span residues 6–27 (KSLG…SGRH), 751–778 (QLYH…IVDS), and 905–936 (EKLT…ILQR). Cysteine 1090 carries S-farnesyl cysteine lipidation.

It belongs to the phosphorylase b kinase regulatory chain family. Although the final Cys may be farnesylated, the terminal tripeptide is probably not removed, and the C-terminus is not methylated.

The protein localises to the cell membrane. It participates in glycan biosynthesis; glycogen metabolism. Functionally, phosphorylase b kinase catalyzes the phosphorylation of serine in certain substrates, including troponin I. The beta chain acts as a regulatory unit and modulates the activity of the holoenzyme in response to phosphorylation. The protein is Probable phosphorylase b kinase regulatory subunit beta of Drosophila melanogaster (Fruit fly).